A 438-amino-acid polypeptide reads, in one-letter code: Trigger factor (438 aa).

In terms of domain architecture, PPIase FKBP-type spans 162–247 (GDIVTIDFEG…VKEIKVKELP (86 aa)).

The protein belongs to the FKBP-type PPIase family. Tig subfamily.

The protein resides in the cytoplasm. The catalysed reaction is [protein]-peptidylproline (omega=180) = [protein]-peptidylproline (omega=0). Its function is as follows. Involved in protein export. Acts as a chaperone by maintaining the newly synthesized protein in an open conformation. Functions as a peptidyl-prolyl cis-trans isomerase. The chain is Trigger factor from Caldicellulosiruptor saccharolyticus (strain ATCC 43494 / DSM 8903 / Tp8T 6331).